A 215-amino-acid chain; its full sequence is uncharacterized protein (215 aa).

Catalysis depends on charge relay system residues serine 114, aspartate 162, and histidine 194.

Belongs to the AB hydrolase superfamily. AB hydrolase 2 family.

This is an uncharacterized protein from Rickettsia typhi (strain ATCC VR-144 / Wilmington).